Consider the following 323-residue polypeptide: Methionyl-tRNA formyltransferase (323 aa).

Residue 113-116 (SLLP) coordinates (6S)-5,6,7,8-tetrahydrofolate.

It belongs to the Fmt family.

The enzyme catalyses L-methionyl-tRNA(fMet) + (6R)-10-formyltetrahydrofolate = N-formyl-L-methionyl-tRNA(fMet) + (6S)-5,6,7,8-tetrahydrofolate + H(+). Attaches a formyl group to the free amino group of methionyl-tRNA(fMet). The formyl group appears to play a dual role in the initiator identity of N-formylmethionyl-tRNA by promoting its recognition by IF2 and preventing the misappropriation of this tRNA by the elongation apparatus. This is Methionyl-tRNA formyltransferase from Nitrosococcus oceani (strain ATCC 19707 / BCRC 17464 / JCM 30415 / NCIMB 11848 / C-107).